A 478-amino-acid chain; its full sequence is MTLSLYNTLTRQKQRFEPLQAGSVSLYCCGVTVYDYCHLGHARSYIVWDTLRRYLLWLGYRVRYVQNFTDIDDKILRRSRQEGTTMQAIADRYTQAYFEDMARLNILEADDYPRATHTLDGIQRLIAELEDKGFAYAADGDVYFSVRRFQDYGKLSGRKLEDLKAGASGRVESAEESLKHDPFDFALWKAAKPEEPAWDSPWGPGRPGWHIECSAMVRDRLGDSIDIHVGGADLVFPHHENEIAQSEAVTGHPLARYWLHNGMVNVGGEKMSKSLGNFTTIRQLLDEGGISPMVLRLFVLQANYRKPIDFTDEALQACQNGWETLQEGLHFGEHWGDRLGWTESVTVDPDLSDRFRMAMDDDLNTPAALAVLFELAKELRRQQNLLIHEGHLDGDAQQLHQHWVTLVQLAGVLGLEAEPELAETNELDEAAIEDWIAKRHAARQAKDFAEADRIRHYLADLGITLIDQAGGITRWSRT.

Residue Cys-29 participates in Zn(2+) binding. The 'HIGH' region signature appears at Val-31–His-41. Zn(2+) is bound by residues Cys-213, His-238, and Glu-242. Positions Lys-270–Ser-274 match the 'KMSKS' region motif. Residue Lys-273 participates in ATP binding.

The protein belongs to the class-I aminoacyl-tRNA synthetase family. In terms of assembly, monomer. The cofactor is Zn(2+).

It is found in the cytoplasm. It catalyses the reaction tRNA(Cys) + L-cysteine + ATP = L-cysteinyl-tRNA(Cys) + AMP + diphosphate. This chain is Cysteine--tRNA ligase, found in Synechococcus sp. (strain ATCC 27144 / PCC 6301 / SAUG 1402/1) (Anacystis nidulans).